A 187-amino-acid polypeptide reads, in one-letter code: ATP synthase subunit b (187 aa).

A helical transmembrane segment spans residues 31 to 51; that stretch reads VAIMGLAIFVLFLILSYLLFN.

This sequence belongs to the ATPase B chain family. In terms of assembly, F-type ATPases have 2 components, F(1) - the catalytic core - and F(0) - the membrane proton channel. F(1) has five subunits: alpha(3), beta(3), gamma(1), delta(1), epsilon(1). F(0) has three main subunits: a(1), b(2) and c(10-14). The alpha and beta chains form an alternating ring which encloses part of the gamma chain. F(1) is attached to F(0) by a central stalk formed by the gamma and epsilon chains, while a peripheral stalk is formed by the delta and b chains.

The protein resides in the cell membrane. Functionally, f(1)F(0) ATP synthase produces ATP from ADP in the presence of a proton or sodium gradient. F-type ATPases consist of two structural domains, F(1) containing the extramembraneous catalytic core and F(0) containing the membrane proton channel, linked together by a central stalk and a peripheral stalk. During catalysis, ATP synthesis in the catalytic domain of F(1) is coupled via a rotary mechanism of the central stalk subunits to proton translocation. Its function is as follows. Component of the F(0) channel, it forms part of the peripheral stalk, linking F(1) to F(0). The polypeptide is ATP synthase subunit b (Lachnoclostridium phytofermentans (strain ATCC 700394 / DSM 18823 / ISDg) (Clostridium phytofermentans)).